Here is a 3227-residue protein sequence, read N- to C-terminus: E3 ubiquitin-protein ligase ptr1 (3227 aa).

4 disordered regions span residues 1806 to 1836 (SGAAQDSMGDQSLSSSSEESSDSDREEPPDL), 1869 to 1894 (MEFEDDQSGSADSVVSEDDADDVMYS), 1908 to 1929 (QDASSQNDDSSFDEASSHGDVI), and 2577 to 2607 (ATTGYTNDQDSRGSTVPKQDPGTTASRKDKK). A compositionally biased stretch (low complexity) spans 1811-1823 (DSMGDQSLSSSSE). The segment covering 1883 to 1894 (VSEDDADDVMYS) has biased composition (acidic residues). Residues 2577–2601 (ATTGYTNDQDSRGSTVPKQDPGTTA) are compositionally biased toward polar residues. An HECT domain is found at 2891–3227 (DADEVKFSKL…NEGSEGFGFA (337 aa)). Cysteine 3194 acts as the Glycyl thioester intermediate in catalysis.

The protein belongs to the UPL family. TOM1/PTR1 subfamily.

Its subcellular location is the nucleus. It carries out the reaction S-ubiquitinyl-[E2 ubiquitin-conjugating enzyme]-L-cysteine + [acceptor protein]-L-lysine = [E2 ubiquitin-conjugating enzyme]-L-cysteine + N(6)-ubiquitinyl-[acceptor protein]-L-lysine.. The protein operates within protein modification; protein ubiquitination. Probable ubiquitin ligase protein involved in mRNA export. E3 ubiquitin ligase proteins mediate ubiquitination and subsequent proteasomal degradation of target proteins. Probably participates in mRNA export from the nucleus by regulating the transport of hnRNP proteins such as rae1. In Schizosaccharomyces pombe (strain 972 / ATCC 24843) (Fission yeast), this protein is E3 ubiquitin-protein ligase ptr1 (ptr1).